Reading from the N-terminus, the 510-residue chain is Cobyric acid synthase (510 aa).

Residues 262 to 460 (EIKVGIIKLP…IHGIFENDEW (199 aa)) enclose the GATase cobBQ-type domain. The Nucleophile role is filled by Cys-343. His-452 is a catalytic residue.

It belongs to the CobB/CobQ family. CobQ subfamily.

The protein operates within cofactor biosynthesis; adenosylcobalamin biosynthesis. In terms of biological role, catalyzes amidations at positions B, D, E, and G on adenosylcobyrinic A,C-diamide. NH(2) groups are provided by glutamine, and one molecule of ATP is hydrogenolyzed for each amidation. The polypeptide is Cobyric acid synthase (Prochlorococcus marinus (strain MIT 9515)).